A 160-amino-acid polypeptide reads, in one-letter code: MMLKNDFNVLGQIAWLWANSPMHRNWSVSLLMKNVIPAIENDQYLLLVDDGFPIAYCSWAKLTLESEARYVKDTNSLKIDDWNAGDRIWIIDWIAPFGDSSLLYKHMRQRFPYDIGRAIRIYPSKKDTGKIIYLKGGKITKKVAEKTFLQYEQELITALQ.

Active-site residues include His23 and Asp92.

This sequence belongs to the RTX toxin acyltransferase family. As to quaternary structure, homodimer.

Its subcellular location is the cytoplasm. The enzyme catalyses a fatty acyl-[ACP] + L-lysyl-[protein] = N(6)-(fatty acyl)-L-lysyl-[protein] + holo-[ACP] + H(+). Functionally, protein-lysine acyltransferase that catalyzes fatty acylation of the protoxin, thereby converting it to the active toxin. The protein is RTX-II toxin-activating lysine-acyltransferase ApxIIC (apxIIC) of Actinobacillus pleuropneumoniae (Haemophilus pleuropneumoniae).